A 180-amino-acid chain; its full sequence is Ribulose bisphosphate carboxylase small subunit, chloroplastic 4 (180 aa).

Residues 1 to 56 (MASSIVSSAAVATRANGAQASMVGPFTGLKSTASFPVSRKQNLDITSIASNGGRVR) constitute a chloroplast transit peptide.

Belongs to the RuBisCO small chain family. Heterohexadecamer of 8 large and 8 small subunits.

Its subcellular location is the plastid. It is found in the chloroplast. RuBisCO catalyzes two reactions: the carboxylation of D-ribulose 1,5-bisphosphate, the primary event in carbon dioxide fixation, as well as the oxidative fragmentation of the pentose substrate. Both reactions occur simultaneously and in competition at the same active site. Although the small subunit is not catalytic it is essential for maximal activity. In Solanum tuberosum (Potato), this protein is Ribulose bisphosphate carboxylase small subunit, chloroplastic 4.